A 729-amino-acid polypeptide reads, in one-letter code: Ribosomal RNA large subunit methyltransferase K/L (729 aa).

A THUMP domain is found at 47–158; that stretch reads TFYRLCLWSR…KNELTLALDL (112 aa).

The protein belongs to the methyltransferase superfamily. RlmKL family.

Its subcellular location is the cytoplasm. The catalysed reaction is guanosine(2445) in 23S rRNA + S-adenosyl-L-methionine = N(2)-methylguanosine(2445) in 23S rRNA + S-adenosyl-L-homocysteine + H(+). It carries out the reaction guanosine(2069) in 23S rRNA + S-adenosyl-L-methionine = N(2)-methylguanosine(2069) in 23S rRNA + S-adenosyl-L-homocysteine + H(+). Functionally, specifically methylates the guanine in position 2445 (m2G2445) and the guanine in position 2069 (m7G2069) of 23S rRNA. This Dichelobacter nodosus (strain VCS1703A) protein is Ribosomal RNA large subunit methyltransferase K/L.